Consider the following 263-residue polypeptide: 3'-5' ssDNA/RNA exonuclease TatD (263 aa).

Positions 91, 127, and 152 each coordinate a divalent metal cation.

It belongs to the metallo-dependent hydrolases superfamily. TatD-type hydrolase family. TatD subfamily. Monomer. The cofactor is Mg(2+).

The protein localises to the cytoplasm. Functionally, 3'-5' exonuclease that prefers single-stranded DNA and RNA. May play a role in the H(2)O(2)-induced DNA damage repair. This is 3'-5' ssDNA/RNA exonuclease TatD from Klebsiella pneumoniae (strain 342).